Consider the following 210-residue polypeptide: Kinetochore protein Spc25 (210 aa).

Positions 42 to 106 form a coiled coil; the sequence is TMENIKRQQH…KKKQERDKLI (65 aa).

It belongs to the SPC25 family. As to quaternary structure, component of the Ndc80 complex, which is composed of Ndc80, Nuf2 and Spc25.

Its subcellular location is the nucleus. The protein resides in the chromosome. It is found in the centromere. The protein localises to the kinetochore. In terms of biological role, acts as a component of the essential kinetochore-associated Ndc80 complex, which is required for chromosome segregation and spindle checkpoint activity during meiosis and mitosis. Required for kinetochore integrity and the organization of stable microtubule binding sites in the outer plate of the kinetochore. Participates in SAC signaling that responds specifically to disruptions in spindle microtubule dynamics. The NDC80 complex synergistically enhances the affinity of the SKA1 complex for microtubules and may allow the NDC80 complex to track depolymerizing microtubules. The polypeptide is Kinetochore protein Spc25 (Drosophila virilis (Fruit fly)).